Reading from the N-terminus, the 155-residue chain is UPF0178 protein ACIAD2644 (155 aa).

The disordered stretch occupies residues Gly-120–Ala-155.

This sequence belongs to the UPF0178 family.

The protein is UPF0178 protein ACIAD2644 of Acinetobacter baylyi (strain ATCC 33305 / BD413 / ADP1).